The sequence spans 267 residues: Acetylglutamate kinase (267 aa).

Substrate contacts are provided by residues 53 to 54, arginine 75, and asparagine 167; that span reads GG.

This sequence belongs to the acetylglutamate kinase family. ArgB subfamily.

It localises to the cytoplasm. It catalyses the reaction N-acetyl-L-glutamate + ATP = N-acetyl-L-glutamyl 5-phosphate + ADP. Its pathway is amino-acid biosynthesis; L-arginine biosynthesis; N(2)-acetyl-L-ornithine from L-glutamate: step 2/4. Its function is as follows. Catalyzes the ATP-dependent phosphorylation of N-acetyl-L-glutamate. The chain is Acetylglutamate kinase from Shewanella pealeana (strain ATCC 700345 / ANG-SQ1).